Reading from the N-terminus, the 559-residue chain is Glucose-6-phosphate isomerase 2 (559 aa).

The active-site Proton donor is the Glu367. Active-site residues include His398 and Lys522.

The protein belongs to the GPI family.

It localises to the cytoplasm. It carries out the reaction alpha-D-glucose 6-phosphate = beta-D-fructose 6-phosphate. It functions in the pathway carbohydrate biosynthesis; gluconeogenesis. Its pathway is carbohydrate degradation; glycolysis; D-glyceraldehyde 3-phosphate and glycerone phosphate from D-glucose: step 2/4. Functionally, catalyzes the reversible isomerization of glucose-6-phosphate to fructose-6-phosphate. The chain is Glucose-6-phosphate isomerase 2 from Chromohalobacter salexigens (strain ATCC BAA-138 / DSM 3043 / CIP 106854 / NCIMB 13768 / 1H11).